The following is a 109-amino-acid chain: Fluoride-specific ion channel FluC 1 (109 aa).

3 consecutive transmembrane segments (helical) span residues 21–41 (FYFKNNFVISIIGSFLYGFFI), 52–72 (ILFSGFFACFTSFSGFVHFLY), and 83–103 (LFIYLNVIVILNLIIMYIGFQ).

Belongs to the fluoride channel Fluc/FEX (TC 1.A.43) family.

It is found in the cell inner membrane. The catalysed reaction is fluoride(in) = fluoride(out). Its function is as follows. Fluoride-specific ion channel. Important for reducing fluoride concentration in the cell, thus reducing its toxicity. The sequence is that of Fluoride-specific ion channel FluC 1 from Prochlorococcus marinus subsp. pastoris (strain CCMP1986 / NIES-2087 / MED4).